Consider the following 326-residue polypeptide: Biotin synthase (326 aa).

The Radical SAM core domain occupies 42 to 266; that stretch reads NEIQLAALLN…LMPKSYVRLA (225 aa). Residues C57, C61, and C64 each coordinate [4Fe-4S] cluster. C101, C132, C192, and R264 together coordinate [2Fe-2S] cluster.

The protein belongs to the radical SAM superfamily. Biotin synthase family. In terms of assembly, homodimer. Requires [4Fe-4S] cluster as cofactor. It depends on [2Fe-2S] cluster as a cofactor.

The catalysed reaction is (4R,5S)-dethiobiotin + (sulfur carrier)-SH + 2 reduced [2Fe-2S]-[ferredoxin] + 2 S-adenosyl-L-methionine = (sulfur carrier)-H + biotin + 2 5'-deoxyadenosine + 2 L-methionine + 2 oxidized [2Fe-2S]-[ferredoxin]. The protein operates within cofactor biosynthesis; biotin biosynthesis; biotin from 7,8-diaminononanoate: step 2/2. In terms of biological role, catalyzes the conversion of dethiobiotin (DTB) to biotin by the insertion of a sulfur atom into dethiobiotin via a radical-based mechanism. This Ehrlichia chaffeensis (strain ATCC CRL-10679 / Arkansas) protein is Biotin synthase.